The primary structure comprises 95 residues: Acylphosphatase 2 (95 aa).

The 88-residue stretch at 6 to 93 (RVIVTVQGRV…PLPPGFEVRP (88 aa)) folds into the Acylphosphatase-like domain. Active-site residues include R21 and N39.

The protein belongs to the acylphosphatase family.

It carries out the reaction an acyl phosphate + H2O = a carboxylate + phosphate + H(+). The protein is Acylphosphatase 2 (acyP2) of Ralstonia nicotianae (strain ATCC BAA-1114 / GMI1000) (Ralstonia solanacearum).